Reading from the N-terminus, the 227-residue chain is Cytochrome c oxidase subunit 2 (227 aa).

Topologically, residues 1-14 (MAYPFQLGFQDAAS) are mitochondrial intermembrane. The chain crosses the membrane as a helical span at residues 15-45 (PIMEELLHFHDHTLMIVFLISSLVLYIITLM). The Mitochondrial matrix portion of the chain corresponds to 46–59 (LTTKLTHTSTMDAQ). Residues 60-87 (EVETVWTILPAIILILIALPSLRILYMM) traverse the membrane as a helical segment. The Mitochondrial intermembrane segment spans residues 88 to 227 (DEVNNPSLTV…VFEKWSVSML (140 aa)). Cu cation contacts are provided by H161, C196, E198, C200, H204, and M207. Position 198 (E198) interacts with Mg(2+).

This sequence belongs to the cytochrome c oxidase subunit 2 family. Component of the cytochrome c oxidase (complex IV, CIV), a multisubunit enzyme composed of 14 subunits. The complex is composed of a catalytic core of 3 subunits MT-CO1, MT-CO2 and MT-CO3, encoded in the mitochondrial DNA, and 11 supernumerary subunits COX4I, COX5A, COX5B, COX6A, COX6B, COX6C, COX7A, COX7B, COX7C, COX8 and NDUFA4, which are encoded in the nuclear genome. The complex exists as a monomer or a dimer and forms supercomplexes (SCs) in the inner mitochondrial membrane with NADH-ubiquinone oxidoreductase (complex I, CI) and ubiquinol-cytochrome c oxidoreductase (cytochrome b-c1 complex, complex III, CIII), resulting in different assemblies (supercomplex SCI(1)III(2)IV(1) and megacomplex MCI(2)III(2)IV(2)). Found in a complex with TMEM177, COA6, COX18, COX20, SCO1 and SCO2. Interacts with TMEM177 in a COX20-dependent manner. Interacts with COX20. Interacts with COX16. Cu cation serves as cofactor.

Its subcellular location is the mitochondrion inner membrane. It carries out the reaction 4 Fe(II)-[cytochrome c] + O2 + 8 H(+)(in) = 4 Fe(III)-[cytochrome c] + 2 H2O + 4 H(+)(out). Component of the cytochrome c oxidase, the last enzyme in the mitochondrial electron transport chain which drives oxidative phosphorylation. The respiratory chain contains 3 multisubunit complexes succinate dehydrogenase (complex II, CII), ubiquinol-cytochrome c oxidoreductase (cytochrome b-c1 complex, complex III, CIII) and cytochrome c oxidase (complex IV, CIV), that cooperate to transfer electrons derived from NADH and succinate to molecular oxygen, creating an electrochemical gradient over the inner membrane that drives transmembrane transport and the ATP synthase. Cytochrome c oxidase is the component of the respiratory chain that catalyzes the reduction of oxygen to water. Electrons originating from reduced cytochrome c in the intermembrane space (IMS) are transferred via the dinuclear copper A center (CU(A)) of subunit 2 and heme A of subunit 1 to the active site in subunit 1, a binuclear center (BNC) formed by heme A3 and copper B (CU(B)). The BNC reduces molecular oxygen to 2 water molecules using 4 electrons from cytochrome c in the IMS and 4 protons from the mitochondrial matrix. The protein is Cytochrome c oxidase subunit 2 (MT-CO2) of Balaenoptera physalus (Fin whale).